A 508-amino-acid chain; its full sequence is Protein disulfide-isomerase (508 aa).

The N-terminal stretch at 1-17 (MLRRALLCLAVAALVRA) is a signal peptide. A Thioredoxin 1 domain is found at 18-134 (DAPEEEDHVL…IVNWLKKRTG (117 aa)). Catalysis depends on nucleophile residues cysteine 53 and cysteine 56. Residues cysteine 53 and cysteine 56 are joined by a disulfide bond. Lysine 200 carries the N6-acetyllysine modification. Lysine 222 and lysine 271 each carry N6-succinyllysine. Residue serine 331 is modified to Phosphoserine. One can recognise a Thioredoxin 2 domain in the interval 349 to 475 (GKIKPHLMSQ…FKKFLESGGQ (127 aa)). Serine 357 carries the post-translational modification Phosphoserine; by FAM20C. Residues cysteine 397 and cysteine 400 each act as nucleophile in the active site. Cysteine 397 and cysteine 400 are disulfide-bonded. Serine 427 is subject to Phosphoserine. Residues 471–508 (ESGGQDGAGDDDDLEDLEEAEEPDMEEDDDQKAVKDEL) form a disordered region. Acidic residues predominate over residues 478-500 (AGDDDDLEDLEEAEEPDMEEDDD). Positions 505-508 (KDEL) match the Prevents secretion from ER motif.

The protein belongs to the protein disulfide isomerase family. As to quaternary structure, heterodimer; heterodimerizes with the protein microsomal triglyceride transfer MTTP. Homodimer. Monomers and homotetramers may also occur. Interacts with P4HA2, forming a heterotetramer consisting of 2 alpha subunits (P4HA2) and 2 beta (P4HB), where P4HB plays the role of a structural subunit; this tetramer catalyzes the formation of 4-hydroxyproline in collagen. Also constitutes the structural subunit of the microsomal triacylglycerol transfer protein MTTP in mammalian cells. Stabilizes both enzymes and retain them in the ER without contributing to the catalytic activity. Binds UBQLN1. Interacts with ERO1B. Binds to CD4, and upon HIV-1 binding to the cell membrane, is part of a P4HB/PDI-CD4-CXCR4-gp120 complex. Interacts with ILDR2. Interacts with ERN1/IRE1A (via N-terminus); the interaction is enhanced by phosphorylation of P4HB by FAM20C in response to endoplasmic reticulum stress and results in attenuation of ERN1 activity. In terms of processing, phosphorylation of Ser-357 by FAM20C is induced by endoplasmic reticulum stress and results in a functional switch from oxidoreductase to molecular chaperone. It also promotes interaction with ERN1.

Its subcellular location is the endoplasmic reticulum. The protein localises to the endoplasmic reticulum lumen. It localises to the melanosome. It is found in the cell membrane. It carries out the reaction Catalyzes the rearrangement of -S-S- bonds in proteins.. This multifunctional protein catalyzes the formation, breakage and rearrangement of disulfide bonds. At the cell surface, seems to act as a reductase that cleaves disulfide bonds of proteins attached to the cell. May therefore cause structural modifications of exofacial proteins. Inside the cell, seems to form/rearrange disulfide bonds of nascent proteins. At high concentrations and following phosphorylation by FAM20C, functions as a chaperone that inhibits aggregation of misfolded proteins. At low concentrations, facilitates aggregation (anti-chaperone activity). May be involved with other chaperones in the structural modification of the TG precursor in hormone biogenesis. Also acts as a structural subunit of various enzymes such as prolyl 4-hydroxylase and microsomal triacylglycerol transfer protein MTTP. Receptor for LGALS9; the interaction retains P4HB at the cell surface of Th2 T helper cells, increasing disulfide reductase activity at the plasma membrane, altering the plasma membrane redox state and enhancing cell migration. The sequence is that of Protein disulfide-isomerase (P4HB) from Homo sapiens (Human).